The following is a 253-amino-acid chain: Small ribosomal subunit protein uS2 (253 aa).

It belongs to the universal ribosomal protein uS2 family.

The protein is Small ribosomal subunit protein uS2 of Cereibacter sphaeroides (strain ATCC 17023 / DSM 158 / JCM 6121 / CCUG 31486 / LMG 2827 / NBRC 12203 / NCIMB 8253 / ATH 2.4.1.) (Rhodobacter sphaeroides).